A 364-amino-acid polypeptide reads, in one-letter code: MKPLAYYEDQLLKDEKSFLKVTEIERLLSYAAYLLPAEFRDDQLKSQTITSILLLLHQFHTGLLFRKIAELPKTEQAILKSERTQYLEYFRKKNPSFEKVSELLYFLNISTFPIELVISKYNPSRQYDSVLFLESVKFLLRVHIMWTTGGDLPLSNPVLQRDFNVKTFIHLHKKYSNSGSAVVLKNSKKVVPRLNTVNSSLDFLQNRTPRLSSILPDEIFTKRLPNLRIFSNFIKVCRPLIYMLFMWHWKRKQKSSSLKVRPWGPWIVAFVFEVISQLIDRRCESATSSRQGFGLERRTNQSQFQHFVVWAFTQGRFYDEFTKHWINRSLSWVNSIPVFGKYLLLSVEERQKSLENYISSVRNY.

Serine 200 carries the phosphoserine modification.

It belongs to the peroxin-16 family.

It localises to the peroxisome membrane. Its function is as follows. Involved in the biogenesis of peroxisomes. In Schizosaccharomyces pombe (strain 972 / ATCC 24843) (Fission yeast), this protein is Peroxisomal membrane protein PEX16 (pex16).